The chain runs to 514 residues: Vacuolar aminopeptidase 1 (514 aa).

Residues 1 to 45 (MEEQREILEQLKKTLQMLTVEPSKNNQIANEEKEKKENENSWCIL) constitute a propeptide, required for vacuolar localization. Mediates aggregation and vesicle formation in Cvt pathway. N-linked (GlcNAc...) asparagine glycans are attached at residues asparagine 107 and asparagine 110. Residue histidine 132 participates in Zn(2+) binding. Histidine 210 contacts substrate. Aspartate 303, glutamate 339, and glutamate 340 together coordinate Zn(2+). Residue glutamate 339 participates in substrate binding. Phosphoserine is present on serine 356. Aspartate 385 is a Zn(2+) binding site. Aspartate 385 and histidine 388 together coordinate substrate. N-linked (GlcNAc...) asparagine glycosylation is present at asparagine 448. A Zn(2+)-binding site is contributed by histidine 479.

The protein belongs to the peptidase M18 family. In terms of assembly, homododecamer. The precursor form of aminopeptidase 1 (prApe1) assembles into dodecamers and further aggregates into higher multimers (the Ape1 complex) in the cytoplasm. The Ape1 complex is disaggregated in the vacuolar lumen, but mature aminopeptidase 1 (mApe1) retains its dodecameric form. Dodecamer assembly in the cytoplasm is essential for formation of an enzymatically active complex. If cytoplasmic homododecamerization of prApe1 is disturbed in mutants, homododecamers of mApe1 will form in the vacuole, but they are enzymatically inactive. Interacts with ATG19. The cofactor is Zn(2+). Synthesized in a precursor form (prApe1) that has an amino-terminal propeptide. The N-terminal extension of the 61 kDa precursor is proteolytically processed in two sequential steps. The first step involves proteinase A (PrA/PEP4) and produces a 55 kDa unstable intermediate (iAPI). The second step involves proteinase B (PrB/PRB1) and converts iAPI into the 50 kDa stable, mature enzyme (mApe1).

The protein localises to the vacuole. The catalysed reaction is Release of an N-terminal amino acid, preferably a neutral or hydrophobic one, from a polypeptide. Aminoacyl-arylamides are poor substrates.. With respect to regulation, strongly and specifically activated by Cl(-) and Br(-), which act as positive allosteric effectors. Inactivated by metal-chelating agents. Its function is as follows. Resident vacuolar enzyme that catalyzes the removal of amino acids from the N-terminus of peptides and proteins. Also acts as the major cargo protein of the cytoplasm-to-vacuole targeting (Cvt) pathway. The precursor form of aminopeptidase 1 (prApe1) assembles into dodecamers and the propeptide mediates the aggregation of dodecamers into higher multimers. The multimers are then recognized via the propeptide by their receptor ATG19, and ATG19 further interacts with ATG11, which tethers the APE1-ATG19 complex to the pre-autophagosomal structure (PAS). The cargo-receptor complex (also Cvt complex) is selectively enwrapped by a double-membrane structure termed the Cvt vesicle under vegetative growth conditions and by a similar but larger double-membrane structure termed the autophagosome under nitrogen starvation conditions. The Cvt vesicle or the autophagosome fuses with the vacuolar membrane and release its content in the vacuolar lumen. In the vacuole, prApe1 is processed into mature aminopeptidase 1 (mApe1). In Saccharomyces cerevisiae (strain ATCC 204508 / S288c) (Baker's yeast), this protein is Vacuolar aminopeptidase 1.